The following is an 889-amino-acid chain: DNA gyrase subunit A (889 aa).

In terms of domain architecture, Topo IIA-type catalytic spans 35–501; it reads LPDVRDGLKP…GFEDLEDEDL (467 aa). The active-site O-(5'-phospho-DNA)-tyrosine intermediate is the Y123. The GyrA-box motif lies at 528–534; sequence QNRGGRG. The segment at 810-889 is disordered; that stretch reads VKEDAEDETN…IQQSSDEDEE (80 aa). The span at 813 to 823 shows a compositional bias: acidic residues; sequence DAEDETNEDEQ. A compositionally biased stretch (basic and acidic residues) spans 863–875; that stretch reads DGRIEVRQDFMDR. Residues 876–889 are compositionally biased toward acidic residues; sequence VEEDIQQSSDEDEE.

It belongs to the type II topoisomerase GyrA/ParC subunit family. In terms of assembly, heterotetramer, composed of two GyrA and two GyrB chains. In the heterotetramer, GyrA contains the active site tyrosine that forms a transient covalent intermediate with DNA, while GyrB binds cofactors and catalyzes ATP hydrolysis.

The protein localises to the cytoplasm. The enzyme catalyses ATP-dependent breakage, passage and rejoining of double-stranded DNA.. Its function is as follows. A type II topoisomerase that negatively supercoils closed circular double-stranded (ds) DNA in an ATP-dependent manner to modulate DNA topology and maintain chromosomes in an underwound state. Negative supercoiling favors strand separation, and DNA replication, transcription, recombination and repair, all of which involve strand separation. Also able to catalyze the interconversion of other topological isomers of dsDNA rings, including catenanes and knotted rings. Type II topoisomerases break and join 2 DNA strands simultaneously in an ATP-dependent manner. The polypeptide is DNA gyrase subunit A (Staphylococcus aureus (strain N315)).